We begin with the raw amino-acid sequence, 146 residues long: MNSLSIFFIVVATAAVCLLFIQGYSIYENYGNIKEFNATHAAFEYSKSIGGTPALDRRVQDVNDTISDVKQKWRCVVYPGNGFVSASIFGFQAEVGPNNTRSIRKFNTMQQCIDFTFSDVINIDIYNPCVAPNINNAECQFLKSVL.

Residues 1–21 (MNSLSIFFIVVATAAVCLLFI) traverse the membrane as a helical; Signal-anchor for type II membrane protein segment. Over 22 to 146 (QGYSIYENYG…AECQFLKSVL (125 aa)) the chain is Virion surface.

The protein belongs to the orthopoxvirus OPG155 protein family. As to quaternary structure, part of a stable entry-fusion complex (EFC) which is at least composed of proteins OPG143, OPG147, OPG155, OPG086, OPG094, OPG107, OPG104, and OPG099. Formation of the viral membrane is necessary for the assembly of the complex. Interacts directly with protein OPG107. In terms of processing, contains two intramolecular disulfide bonds. They are created by the viral disulfide bond formation pathway, a poxvirus-specific pathway that operates on the cytoplasmic side of the MV membranes.

Its subcellular location is the virion membrane. Envelope protein required for virus entry into host cell and for cell-cell fusion (syncytium formation). In Cowpox virus (strain GRI-90 / Grishak) (CPV), this protein is Envelope protein OPG155 (OPG155).